A 434-amino-acid polypeptide reads, in one-letter code: Trigger factor (434 aa).

A PPIase FKBP-type domain is found at G163–P248.

Belongs to the FKBP-type PPIase family. Tig subfamily.

The protein localises to the cytoplasm. It carries out the reaction [protein]-peptidylproline (omega=180) = [protein]-peptidylproline (omega=0). Involved in protein export. Acts as a chaperone by maintaining the newly synthesized protein in an open conformation. Functions as a peptidyl-prolyl cis-trans isomerase. This Shouchella clausii (strain KSM-K16) (Alkalihalobacillus clausii) protein is Trigger factor.